Consider the following 606-residue polypeptide: Glutamine--fructose-6-phosphate aminotransferase [isomerizing] (606 aa).

Cys-2 (nucleophile; for GATase activity) is an active-site residue. The Glutamine amidotransferase type-2 domain occupies 2 to 218 (CGIFGYLGEK…SGELAVLRIG (217 aa)). 2 SIS domains span residues 278 to 424 (FTES…HRQV) and 448 to 596 (LDSS…VDRP). Lys-601 (for Fru-6P isomerization activity) is an active-site residue.

As to quaternary structure, homodimer.

Its subcellular location is the cytoplasm. It carries out the reaction D-fructose 6-phosphate + L-glutamine = D-glucosamine 6-phosphate + L-glutamate. In terms of biological role, catalyzes the first step in hexosamine metabolism, converting fructose-6P into glucosamine-6P using glutamine as a nitrogen source. The protein is Glutamine--fructose-6-phosphate aminotransferase [isomerizing] of Chlamydia trachomatis serovar D (strain ATCC VR-885 / DSM 19411 / UW-3/Cx).